The primary structure comprises 300 residues: Bidirectional sugar transporter SWEET12 (300 aa).

Residues methionine 1–alanine 4 lie on the Extracellular side of the membrane. A helical membrane pass occupies residues leucine 5 to valine 25. Positions alanine 8–glutamine 92 constitute a MtN3/slv 1 domain. The Cytoplasmic segment spans residues proline 26 to glutamate 38. The chain crosses the membrane as a helical span at residues serine 39 to leucine 61. The Extracellular portion of the chain corresponds to threonine 62–leucine 67. A helical membrane pass occupies residues leucine 68–tyrosine 88. At alanine 89–lysine 99 the chain is on the cytoplasmic side. The chain crosses the membrane as a helical span at residues leucine 100–valine 120. At lysine 121–threonine 128 the chain is on the extracellular side. Residues leucine 129 to isoleucine 149 form a helical membrane-spanning segment. The region spanning glycine 131–lysine 213 is the MtN3/slv 2 domain. The Cytoplasmic portion of the chain corresponds to arginine 150–proline 162. The chain crosses the membrane as a helical span at residues phenylalanine 163–methionine 183. Residues lysine 184–aspartate 185 lie on the Extracellular side of the membrane. The helical transmembrane segment at phenylalanine 186 to tyrosine 206 threads the bilayer. Residues valine 207–alanine 300 lie on the Cytoplasmic side of the membrane. Residues alanine 256–alanine 300 are disordered. The span at proline 269–valine 280 shows a compositional bias: basic and acidic residues. The segment covering isoleucine 284–leucine 294 has biased composition (pro residues).

This sequence belongs to the SWEET sugar transporter family. Forms homooligomers and/or heterooligomers.

Its subcellular location is the cell membrane. Its function is as follows. Mediates both low-affinity uptake and efflux of sugar across the plasma membrane. Confers blight susceptibility. Confers TAL effector-mediated susceptibility to Xanthomonas oryzae pv. oryzae. This Oryza sativa subsp. japonica (Rice) protein is Bidirectional sugar transporter SWEET12 (SWEET12).